Here is a 144-residue protein sequence, read N- to C-terminus: Glycine-rich protein DC9.1 (144 aa).

The helical transmembrane segment at 5 to 25 threads the bilayer; the sequence is IFLLLGLSIAFAILISSEVAA. 11 tandem repeats follow at residues 37 to 42, 43 to 48, 50 to 55, 56 to 61, 63 to 68, 69 to 74, 76 to 81, 82 to 87, 89 to 94, 102 to 107, and 108 to 113. The tract at residues 37–113 is 11 X 6 AA tandem repeats of G-Y-[NH]-N-G -G; sequence GYNNGGGYHN…NNGGGHHGGG (77 aa).

Belongs to the GRP family.

The protein resides in the membrane. The sequence is that of Glycine-rich protein DC9.1 from Daucus carota (Wild carrot).